Here is a 527-residue protein sequence, read N- to C-terminus: Probable protein kinase UbiB (527 aa).

In terms of domain architecture, Protein kinase spans 123–527 (EFNETALASA…AIWLLIYLLS (405 aa)). ATP-binding positions include 129–137 (LASASIAQV) and lysine 161. Aspartate 296 acts as the Proton acceptor in catalysis. A helical membrane pass occupies residues 506–526 (FTSFILGLCTGLAIWLLIYLL).

Belongs to the ABC1 family. UbiB subfamily.

It localises to the cell inner membrane. Its pathway is cofactor biosynthesis; ubiquinone biosynthesis [regulation]. Is probably a protein kinase regulator of UbiI activity which is involved in aerobic coenzyme Q (ubiquinone) biosynthesis. The protein is Probable protein kinase UbiB of Pasteurella multocida (strain Pm70).